Reading from the N-terminus, the 423-residue chain is Glycine amidinotransferase, mitochondrial (423 aa).

A mitochondrion-targeting transit peptide spans 1 to 43; the sequence is MLRVRCLRGGSRGAEAVHYIGSRLGRTLTGWVQRTFQSTQAAT. Residues 43–63 form a disordered region; it reads TASSRNSFAADDKATEPLPKD. Phosphoserine is present on residues S46 and S49. Residues 52-61 are compositionally biased toward basic and acidic residues; that stretch reads ADDKATEPLP. Residue D170 coordinates arginine. Active-site residues include D254 and H303. Residues D305, R322, S354, and S355 each coordinate arginine. K385 is modified (N6-acetyllysine). C407 serves as the catalytic Amidino-cysteine intermediate.

This sequence belongs to the amidinotransferase family. Homodimer.

It localises to the mitochondrion inner membrane. The catalysed reaction is L-arginine + glycine = guanidinoacetate + L-ornithine. It catalyses the reaction 4-aminobutanoate + L-arginine = 4-guanidinobutanoate + L-ornithine. It carries out the reaction beta-alanine + L-arginine = 3-guanidinopropanoate + L-ornithine. The enzyme catalyses taurine + L-arginine = taurocyamine + L-ornithine. It participates in amine and polyamine biosynthesis; creatine biosynthesis; creatine from L-arginine and glycine: step 1/2. Functionally, transamidinase that catalyzes the transfer of the amidino group of L-arginine onto the amino moiety of acceptor metabolites such as glycine, beta-alanine, gamma-aminobutyric acid (GABA) and taurine yielding the corresponding guanidine derivatives. Catalyzes the rate-limiting step of creatine biosynthesis, namely the transfer of the amidino group from L-arginine to glycine to generate guanidinoacetate, which is then methylated by GAMT to form creatine. Provides creatine as a source for ATP generation in tissues with high energy demands, in particular skeletal muscle, heart and brain. The sequence is that of Glycine amidinotransferase, mitochondrial (GATM) from Macaca fascicularis (Crab-eating macaque).